The primary structure comprises 302 residues: Glutamate/aspartate import solute-binding protein (302 aa).

An N-terminal signal peptide occupies residues 1-22; that stretch reads MQLRKPATAILALALSAGLAQA.

It belongs to the bacterial solute-binding protein 3 family. As to quaternary structure, the complex is composed of two ATP-binding proteins (GltL), two transmembrane proteins (GltJ and GltK) and a solute-binding protein (GltI).

It is found in the periplasm. In terms of biological role, part of the ABC transporter complex GltIJKL involved in glutamate and aspartate uptake. Binds to both glutamate and aspartate. This is Glutamate/aspartate import solute-binding protein (gltI) from Escherichia coli (strain K12).